Here is a 270-residue protein sequence, read N- to C-terminus: Hydroxyethylthiazole kinase (270 aa).

Methionine 46 serves as a coordination point for substrate. Residues arginine 120 and threonine 166 each coordinate ATP. Position 193 (glycine 193) interacts with substrate.

This sequence belongs to the Thz kinase family. Mg(2+) serves as cofactor.

It catalyses the reaction 5-(2-hydroxyethyl)-4-methylthiazole + ATP = 4-methyl-5-(2-phosphooxyethyl)-thiazole + ADP + H(+). The protein operates within cofactor biosynthesis; thiamine diphosphate biosynthesis; 4-methyl-5-(2-phosphoethyl)-thiazole from 5-(2-hydroxyethyl)-4-methylthiazole: step 1/1. Catalyzes the phosphorylation of the hydroxyl group of 4-methyl-5-beta-hydroxyethylthiazole (THZ). The chain is Hydroxyethylthiazole kinase from Herpetosiphon aurantiacus (strain ATCC 23779 / DSM 785 / 114-95).